The following is a 692-amino-acid chain: Follicle-stimulating hormone receptor (692 aa).

A signal peptide spans 1-17 (MALLLVSLLAFLGSGSG). 2 disulfides stabilise this stretch: Cys-18/Cys-25 and Cys-23/Cys-32. One can recognise an LRRNT domain in the interval 18–46 (CHHWLCHCSNRVFLCQDSKVTEIPPDLPR). The Extracellular segment spans residues 18-365 (CHHWLCHCSN…EDIMGYNILR (348 aa)). 9 LRR repeats span residues 49–72 (IELRFVLTKLRVIPKGSFSGFGDL), 73–97 (EKIEISQNDVLEVIEADVFSNLPNL), 98–118 (HEIRIEKANNLLYINPEAFQN), 119–143 (LPSLRYLLISNTGIKHLPAFHKIQS), 144–169 (LQKVLLDIQDNINIHIIARNSFMGLS), 170–192 (FESVILWLNKNGIQEIHNCAFNG), 193–216 (TQLDELNLSDNNNLEELPDDVFQG), 217–240 (ASGPVVLDISRTKVYSLPNHGLEN), and 241–259 (LKKLRARSTYRLKKLPSLD). Residues Asn-191 and Asn-199 are each glycosylated (N-linked (GlcNAc...) asparagine). Cystine bridges form between Cys-275–Cys-345, Cys-276–Cys-292, Cys-276–Cys-355, and Cys-292–Cys-337. Asn-293 carries N-linked (GlcNAc...) asparagine glycosylation. Tyr-334 carries the sulfotyrosine modification. The helical transmembrane segment at 366 to 386 (VLIWFISILAITGNTTVLVVL) threads the bilayer. The Cytoplasmic segment spans residues 387–397 (TTSQYKLTVPR). The helical transmembrane segment at 398 to 420 (FLMCNLAFADLCIGIYLLLIASV) threads the bilayer. The Extracellular portion of the chain corresponds to 421–442 (DIHTKSQYHNYAIDWQTGAGCD). A disulfide bond links Cys-441 and Cys-516. A helical transmembrane segment spans residues 443–464 (AAGFFTVFASELSVYTLAAITL). The Cytoplasmic segment spans residues 465 to 484 (ERWHTITHAMQLECKVQLCH). The chain crosses the membrane as a helical span at residues 485-507 (AASIMVLGWAFAFAAALFPIFGI). The Extracellular portion of the chain corresponds to 508–527 (SSYMKVSICLPMDIDSPLSQ). The helical transmembrane segment at 528–549 (LYVMALLVLNALAFVVICGCYT) threads the bilayer. The Cytoplasmic portion of the chain corresponds to 550-572 (HIYLTVRNPNIVSSSRDTKIAKR). A helical transmembrane segment spans residues 573–596 (MATLIFTDFLCMAPILFFAISASL). Over 597 to 607 (KVPLITVSKAK) the chain is Extracellular. A helical transmembrane segment spans residues 608 to 629 (ILLVLFYPINSCANPFLYAIFT). Topologically, residues 630–692 (KNFRRDFFVL…LVPLNHSVQN (63 aa)) are cytoplasmic.

This sequence belongs to the G-protein coupled receptor 1 family. FSH/LSH/TSH subfamily. As to quaternary structure, homotrimer. Functions as a homotrimer binding the FSH hormone heterodimer composed of CGA and FSHB. Interacts with ARRB2. Interacts with APPL2; interaction is independent of follicle stimulating hormone stimulation. N-glycosylated; indirectly required for FSH-binding, possibly via a conformational change that allows high affinity binding of hormone. In terms of processing, sulfated.

Its subcellular location is the cell membrane. Its function is as follows. G protein-coupled receptor for follitropin, the follicle-stimulating hormone. Through cAMP production activates the downstream PI3K-AKT and ERK1/ERK2 signaling pathways. In Mus musculus (Mouse), this protein is Follicle-stimulating hormone receptor (Fshr).